The following is a 120-amino-acid chain: Ribonuclease P protein component (120 aa).

This sequence belongs to the RnpA family. In terms of assembly, consists of a catalytic RNA component (M1 or rnpB) and a protein subunit.

The enzyme catalyses Endonucleolytic cleavage of RNA, removing 5'-extranucleotides from tRNA precursor.. RNaseP catalyzes the removal of the 5'-leader sequence from pre-tRNA to produce the mature 5'-terminus. It can also cleave other RNA substrates such as 4.5S RNA. The protein component plays an auxiliary but essential role in vivo by binding to the 5'-leader sequence and broadening the substrate specificity of the ribozyme. The protein is Ribonuclease P protein component of Blochmanniella floridana.